The following is a 118-amino-acid chain: Large ribosomal subunit protein bL20 (118 aa).

The protein belongs to the bacterial ribosomal protein bL20 family.

In terms of biological role, binds directly to 23S ribosomal RNA and is necessary for the in vitro assembly process of the 50S ribosomal subunit. It is not involved in the protein synthesizing functions of that subunit. This chain is Large ribosomal subunit protein bL20 (rplT), found in Aquifex aeolicus (strain VF5).